The primary structure comprises 619 residues: Protein DFG16 (619 aa).

M1 is a topological domain (extracellular). A helical transmembrane segment spans residues 2 to 22 (IIRLHFYYLLTLVYHLGLVGA). Topologically, residues 23 to 167 (YEKAARKRIQ…KDPFPLGMIM (145 aa)) are cytoplasmic. The segment at 33–54 (PPDLIPGPPGHKLGDERPPHYD) is disordered. A compositionally biased stretch (basic and acidic residues) spans 44 to 54 (KLGDERPPHYD). The helical transmembrane segment at 168-188 (ITFASGCICVATWMLFLVVLL) threads the bilayer. The Extracellular portion of the chain corresponds to 189 to 203 (LPSDNHNRRNKVVHV). Residues 204–224 (YVLFSAIIRTVFLNETIAVIF) traverse the membrane as a helical segment. The Cytoplasmic segment spans residues 225-291 (DSQYHDDYQD…IPFKMKKGTH (67 aa)). The helical transmembrane segment at 292-312 (IIITVGCFLSLADNILFANLL) threads the bilayer. Topologically, residues 313 to 321 (WRKNLVVLK) are extracellular. The helical transmembrane segment at 322–342 (VFYKLIELLIYTIFISIICYF) threads the bilayer. Over 343–378 (TWHNFAYILLPKTAEINTDGKCKTKLRILWENYHET) the chain is Cytoplasmic. A helical transmembrane segment spans residues 379-399 (IPLLAYNILIFILFYFTTIFF). The Extracellular segment spans residues 400–410 (AAFTKHVRGWT). Residues 411–431 (FNFVHLLKVLITVNVWGLIGV) form a helical membrane-spanning segment. The Cytoplasmic portion of the chain corresponds to 432-619 (LEKRELHISK…NHIYNYENSD (188 aa)). Composition is skewed to polar residues over residues 485–504 (KSNT…SPTW) and 526–549 (KFGQ…TLSK). 2 disordered regions span residues 485-506 (KSNT…TWKS) and 520-586 (IMKS…ADKH). Residues 552–561 (QLLRKPRRKT) show a composition bias toward basic residues.

It localises to the membrane. In terms of biological role, involved in invasion during filamentous growth. This is Protein DFG16 (DFG16) from Saccharomyces cerevisiae (strain ATCC 204508 / S288c) (Baker's yeast).